Reading from the N-terminus, the 396-residue chain is Formate-dependent phosphoribosylglycinamide formyltransferase (396 aa).

N(1)-(5-phospho-beta-D-ribosyl)glycinamide-binding positions include 24 to 25 (EL) and E84. ATP contacts are provided by residues R116, K157, 162 to 167 (SSGKGQ), 197 to 200 (EGFV), and E205. In terms of domain architecture, ATP-grasp spans 121-310 (RLAAETLGIK…EFALHVRAIL (190 aa)). Mg(2+) contacts are provided by E269 and E281. Residues D288, K359, and 366–367 (RR) contribute to the N(1)-(5-phospho-beta-D-ribosyl)glycinamide site.

The protein belongs to the PurK/PurT family. As to quaternary structure, homodimer.

It carries out the reaction N(1)-(5-phospho-beta-D-ribosyl)glycinamide + formate + ATP = N(2)-formyl-N(1)-(5-phospho-beta-D-ribosyl)glycinamide + ADP + phosphate + H(+). The protein operates within purine metabolism; IMP biosynthesis via de novo pathway; N(2)-formyl-N(1)-(5-phospho-D-ribosyl)glycinamide from N(1)-(5-phospho-D-ribosyl)glycinamide (formate route): step 1/1. Its function is as follows. Involved in the de novo purine biosynthesis. Catalyzes the transfer of formate to 5-phospho-ribosyl-glycinamide (GAR), producing 5-phospho-ribosyl-N-formylglycinamide (FGAR). Formate is provided by PurU via hydrolysis of 10-formyl-tetrahydrofolate. The polypeptide is Formate-dependent phosphoribosylglycinamide formyltransferase (Psychromonas ingrahamii (strain DSM 17664 / CCUG 51855 / 37)).